A 1362-amino-acid polypeptide reads, in one-letter code: DNA-directed RNA polymerase subunit beta (1362 aa).

It belongs to the RNA polymerase beta chain family. As to quaternary structure, the RNAP catalytic core consists of 2 alpha, 1 beta, 1 beta' and 1 omega subunit. When a sigma factor is associated with the core the holoenzyme is formed, which can initiate transcription.

It catalyses the reaction RNA(n) + a ribonucleoside 5'-triphosphate = RNA(n+1) + diphosphate. Functionally, DNA-dependent RNA polymerase catalyzes the transcription of DNA into RNA using the four ribonucleoside triphosphates as substrates. The chain is DNA-directed RNA polymerase subunit beta from Acinetobacter baumannii (strain AB307-0294).